A 196-amino-acid chain; its full sequence is MTTRKCNKFRKTSESEISLSLNLDGEGKSNIDTGIGFLNHMLNLMTKHGFLDLDIKAIGDLEVDAHHTVEDIGIVLGKALKEALGNKEKIKRYGTCFLPMDESLAFVSIDISGRAFLVYNCEFTVDKVGDMDTELVEEFLRAFAFNSEITLHTKILYGKNNHHMIEAIFKALGRAIKEAVLIDEKIKGVMSTKGII.

It belongs to the imidazoleglycerol-phosphate dehydratase family.

The protein localises to the cytoplasm. It catalyses the reaction D-erythro-1-(imidazol-4-yl)glycerol 3-phosphate = 3-(imidazol-4-yl)-2-oxopropyl phosphate + H2O. It functions in the pathway amino-acid biosynthesis; L-histidine biosynthesis; L-histidine from 5-phospho-alpha-D-ribose 1-diphosphate: step 6/9. In Clostridium novyi (strain NT), this protein is Imidazoleglycerol-phosphate dehydratase.